A 463-amino-acid polypeptide reads, in one-letter code: Chromosomal replication initiator protein DnaA (463 aa).

Positions 1 to 83 (MSTNQIILTD…LQLFQHYNNT (83 aa)) are domain I, interacts with DnaA modulators. The domain II stretch occupies residues 83 to 124 (TIKSVEIITKELPGTSKTVIELPTKTFADIGSSELNAENIFS). A domain III, AAA+ region region spans residues 125–343 (TLDVRFTFDN…GALNKVIAHS (219 aa)). Residues Gly-171, Gly-173, Lys-174, and Thr-175 each coordinate ATP. The interval 344–463 (NFTLKEITLE…INLLMKILQN (120 aa)) is domain IV, binds dsDNA.

This sequence belongs to the DnaA family. Oligomerizes as a right-handed, spiral filament on DNA at oriC.

It localises to the cytoplasm. Its function is as follows. Plays an essential role in the initiation and regulation of chromosomal replication. ATP-DnaA binds to the origin of replication (oriC) to initiate formation of the DNA replication initiation complex once per cell cycle. Binds the DnaA box (a 9 base pair repeat at the origin) and separates the double-stranded (ds)DNA. Forms a right-handed helical filament on oriC DNA; dsDNA binds to the exterior of the filament while single-stranded (ss)DNA is stabiized in the filament's interior. The ATP-DnaA-oriC complex binds and stabilizes one strand of the AT-rich DNA unwinding element (DUE), permitting loading of DNA polymerase. After initiation quickly degrades to an ADP-DnaA complex that is not apt for DNA replication. Binds acidic phospholipids. In Rickettsia canadensis (strain McKiel), this protein is Chromosomal replication initiator protein DnaA.